Here is a 403-residue protein sequence, read N- to C-terminus: Dihydroorotase (403 aa).

Residues H48 and H50 each contribute to the Zn(2+) site. Substrate contacts are provided by residues 50–52 (HLR) and N82. Zn(2+) contacts are provided by E140, H172, H211, and D277. The active site involves D277. H281 contributes to the substrate binding site.

Belongs to the metallo-dependent hydrolases superfamily. DHOase family. Class I DHOase subfamily. The cofactor is Zn(2+).

It carries out the reaction (S)-dihydroorotate + H2O = N-carbamoyl-L-aspartate + H(+). It functions in the pathway pyrimidine metabolism; UMP biosynthesis via de novo pathway; (S)-dihydroorotate from bicarbonate: step 3/3. Catalyzes the reversible cyclization of carbamoyl aspartate to dihydroorotate. The protein is Dihydroorotase of Archaeoglobus fulgidus (strain ATCC 49558 / DSM 4304 / JCM 9628 / NBRC 100126 / VC-16).